A 137-amino-acid polypeptide reads, in one-letter code: NADH-quinone oxidoreductase subunit A (137 aa).

3 consecutive transmembrane segments (helical) span residues 12–32 (WAFA…LGVS), 68–88 (LVAM…AWAV), and 94–114 (GWVG…GLVY).

Belongs to the complex I subunit 3 family. As to quaternary structure, NDH-1 is composed of 13 different subunits. Subunits NuoA, H, J, K, L, M, N constitute the membrane sector of the complex.

Its subcellular location is the cell inner membrane. The catalysed reaction is a quinone + NADH + 5 H(+)(in) = a quinol + NAD(+) + 4 H(+)(out). Its function is as follows. NDH-1 shuttles electrons from NADH, via FMN and iron-sulfur (Fe-S) centers, to quinones in the respiratory chain. The immediate electron acceptor for the enzyme in this species is believed to be ubiquinone. Couples the redox reaction to proton translocation (for every two electrons transferred, four hydrogen ions are translocated across the cytoplasmic membrane), and thus conserves the redox energy in a proton gradient. The polypeptide is NADH-quinone oxidoreductase subunit A (Ectopseudomonas mendocina (strain ymp) (Pseudomonas mendocina)).